The primary structure comprises 256 residues: uncharacterized protein (256 aa).

Residues 1-24 form the signal peptide; that stretch reads MIKRVNKLVLGISLLFLVISITAG. C25 carries N-palmitoyl cysteine lipidation. C25 carries S-diacylglycerol cysteine lipidation.

Belongs to the staphylococcal tandem lipoprotein family.

It localises to the cell membrane. This is an uncharacterized protein from Staphylococcus aureus.